The sequence spans 81 residues: Trefoil factor 1 (81 aa).

An N-terminal signal peptide occupies residues 1–23 (MEHRVIYVLVLVCALTLSSLAQG). The P-type domain maps to 26 to 69 (ETCTVAPHHRDNCGSPGITPSQCKDKGCCFDNTVRGVPWCYYPV). 3 cysteine pairs are disulfide-bonded: Cys28/Cys54, Cys38/Cys53, and Cys48/Cys65.

It is found in the secreted. Functionally, stabilizer of the mucous gel overlying the gastrointestinal mucosa that provides a physical barrier against various noxious agents. This chain is Trefoil factor 1 (TFF1), found in Canis lupus familiaris (Dog).